We begin with the raw amino-acid sequence, 695 residues long: Highly divergent homeobox (695 aa).

DNA-binding regions (homeobox) lie at residues 3 to 63 and 440 to 503; these read LRSV…SSKS and ALQD…RLMG. The tract at residues 56–81 is disordered; that stretch reads RRKMSSKSALESGGAPPGTAHTAPSV. The disordered stretch occupies residues 653–695; sequence QQALLSDLPPELEEMDFNHTSPEPDDTSFSLSSLSEKNASDSL. The span at 679–695 shows a compositional bias: polar residues; sequence TSFSLSSLSEKNASDSL.

Its subcellular location is the nucleus. In Gallus gallus (Chicken), this protein is Highly divergent homeobox (HDX).